The chain runs to 87 residues: Small ribosomal subunit protein uS17 (87 aa).

The protein belongs to the universal ribosomal protein uS17 family. In terms of assembly, part of the 30S ribosomal subunit.

Its function is as follows. One of the primary rRNA binding proteins, it binds specifically to the 5'-end of 16S ribosomal RNA. In Geobacillus thermodenitrificans (strain NG80-2), this protein is Small ribosomal subunit protein uS17.